The chain runs to 485 residues: Acetyl-coenzyme A carboxylase carboxyl transferase subunit beta, chloroplastic (485 aa).

In terms of domain architecture, CoA carboxyltransferase N-terminal spans 218-485; that stretch reads LWIQCDNCYA…FFPLNKNEIK (268 aa). Residues Cys-222, Cys-225, Cys-241, and Cys-244 each coordinate Zn(2+). Residues 222 to 244 form a C4-type zinc finger; it reads CDNCYALIYKKALKFKMNVCEQC.

It belongs to the AccD/PCCB family. Acetyl-CoA carboxylase is a heterohexamer composed of biotin carboxyl carrier protein, biotin carboxylase and 2 subunits each of ACCase subunit alpha and ACCase plastid-coded subunit beta (accD). Zn(2+) is required as a cofactor.

The protein localises to the plastid. The protein resides in the chloroplast stroma. The enzyme catalyses N(6)-carboxybiotinyl-L-lysyl-[protein] + acetyl-CoA = N(6)-biotinyl-L-lysyl-[protein] + malonyl-CoA. It participates in lipid metabolism; malonyl-CoA biosynthesis; malonyl-CoA from acetyl-CoA: step 1/1. Functionally, component of the acetyl coenzyme A carboxylase (ACC) complex. Biotin carboxylase (BC) catalyzes the carboxylation of biotin on its carrier protein (BCCP) and then the CO(2) group is transferred by the transcarboxylase to acetyl-CoA to form malonyl-CoA. This is Acetyl-coenzyme A carboxylase carboxyl transferase subunit beta, chloroplastic from Aethionema cordifolium (Lebanon stonecress).